The following is a 977-amino-acid chain: Ubiquitin-like modifier-activating enzyme 7 (977 aa).

It belongs to the ubiquitin-activating E1 family. In terms of processing, ubiquitinated by RNF170.

The protein localises to the cytoplasm. It localises to the nucleus. It functions in the pathway protein modification; protein ubiquitination. In terms of biological role, E1-activating enzyme that catalyzes the covalent conjugation of the ubiquitin-like protein product of ISG15 to additional interferons stimulated proteins (ISGs) as well as other cellular proteins such as P53 in a process termed protein ISGylation. Plays an essential role in antiviral immunity together with ISG15 by restricting the replication of many viruses including rabies virus, influenza virus, sindbis virus or rotavirus. The polypeptide is Ubiquitin-like modifier-activating enzyme 7 (Mus musculus (Mouse)).